The primary structure comprises 483 residues: Protein P55 (483 aa).

A helical membrane pass occupies residues 342–359 (LTPVMALIIILVYYSIYG).

The protein resides in the host membrane. The sequence is that of Protein P55 from Vitis vinifera (Grape).